A 178-amino-acid polypeptide reads, in one-letter code: Cytidylate kinase (178 aa).

Position 7–15 (7–15) interacts with ATP; that stretch reads GLPGTGTTT.

The protein belongs to the cytidylate kinase family. Type 2 subfamily.

The protein localises to the cytoplasm. It catalyses the reaction CMP + ATP = CDP + ADP. The catalysed reaction is dCMP + ATP = dCDP + ADP. This chain is Cytidylate kinase (cmk), found in Methanocaldococcus jannaschii (strain ATCC 43067 / DSM 2661 / JAL-1 / JCM 10045 / NBRC 100440) (Methanococcus jannaschii).